A 459-amino-acid polypeptide reads, in one-letter code: Cysteine--tRNA ligase (459 aa).

Residue C31 participates in Zn(2+) binding. The 'HIGH' region signature appears at 33–43 (PTVYYNPHIGN). Residues C216, H241, and E245 each coordinate Zn(2+). A 'KMSKS' region motif is present at residues 274-278 (KMSKS). K277 provides a ligand contact to ATP.

It belongs to the class-I aminoacyl-tRNA synthetase family. In terms of assembly, monomer. The cofactor is Zn(2+).

The protein resides in the cytoplasm. The enzyme catalyses tRNA(Cys) + L-cysteine + ATP = L-cysteinyl-tRNA(Cys) + AMP + diphosphate. This is Cysteine--tRNA ligase from Rickettsia rickettsii (strain Iowa).